We begin with the raw amino-acid sequence, 364 residues long: Leucine dehydrogenase (364 aa).

The active site involves K80. 180-186 (GVGNVAY) provides a ligand contact to NAD(+).

This sequence belongs to the Glu/Leu/Phe/Val dehydrogenases family.

It carries out the reaction L-leucine + NAD(+) + H2O = 4-methyl-2-oxopentanoate + NH4(+) + NADH + H(+). Its pathway is amino-acid degradation; L-leucine degradation; 4-methyl-2-oxopentanoate from L-leucine (dehydrogenase route): step 1/1. In terms of biological role, catalyzes the reversible deamination of L-leucine to 4-methyl-2-oxopentanoate. The polypeptide is Leucine dehydrogenase (yqiT) (Bacillus subtilis (strain 168)).